Consider the following 220-residue polypeptide: Charged multivesicular body protein 2a (220 aa).

Residues 12 to 53 are a coiled coil; sequence EEMLRQNQRALNRAMRDLDRERQRLEQQEKKIIADIKKMAKQ. The interval 184–220 is disordered; it reads ATGGSLSVAAGKKAEPQPTLADADADLEERLNNLRRD. An MIT-interacting motif motif is present at residues 208–218; it reads ADLEERLNNLR. The segment covering 211–220 has biased composition (basic and acidic residues); the sequence is EERLNNLRRD.

It belongs to the SNF7 family. As to quaternary structure, probable core component of the endosomal sorting required for transport complex III (ESCRT-III). ESCRT-III components are thought to multimerize to form a flat lattice on the perimeter membrane of the endosome.

It localises to the late endosome membrane. It is found in the cytoplasm. Functionally, probable core component of the endosomal sorting required for transport complex III (ESCRT-III) which is involved in multivesicular bodies (MVBs) formation and sorting of endosomal cargo proteins into MVBs. MVBs contain intraluminal vesicles (ILVs) that are generated by invagination and scission from the limiting membrane of the endosome and mostly are delivered to lysosomes enabling degradation of membrane proteins, such as stimulated growth factor receptors, lysosomal enzymes and lipids. This chain is Charged multivesicular body protein 2a (chmp2a), found in Danio rerio (Zebrafish).